Reading from the N-terminus, the 126-residue chain is MSYRKLGRTSSQRKALLRDLTTSLIVNGSITTTEPRAKEVRKTMDQMITLAKKGDLASRRKAAAFVRNVVADVKEDGDDIKIQSALQNLFEDIAPKYADRNGGYTRILKTMPRRGDGAKMVILELV.

The protein belongs to the bacterial ribosomal protein bL17 family. As to quaternary structure, part of the 50S ribosomal subunit. Contacts protein L32.

In Limosilactobacillus fermentum (strain NBRC 3956 / LMG 18251) (Lactobacillus fermentum), this protein is Large ribosomal subunit protein bL17.